Here is a 145-residue protein sequence, read N- to C-terminus: uncharacterized protein (145 aa).

Residues 97–117 traverse the membrane as a helical segment; sequence ISMLLLIVIIAIGLTISYMVI.

The protein resides in the membrane. This is an uncharacterized protein from Methanocaldococcus jannaschii (strain ATCC 43067 / DSM 2661 / JAL-1 / JCM 10045 / NBRC 100440) (Methanococcus jannaschii).